The following is a 134-amino-acid chain: UPF0412 protein YaaI (134 aa).

Positions 1–23 are cleaved as a signal peptide; the sequence is MRSVLTISVGLLFGLALSSVAHA.

Belongs to the UPF0412 family.

In Salmonella paratyphi A (strain ATCC 9150 / SARB42), this protein is UPF0412 protein YaaI.